Reading from the N-terminus, the 329-residue chain is Holliday junction branch migration complex subunit RuvB (329 aa).

A large ATPase domain (RuvB-L) region spans residues 1–181 (MNELLHQHKA…FGIPLHLEFY (181 aa)). ATP is bound by residues L20, R21, G62, K65, T66, T67, R171, Y181, and R218. T66 contacts Mg(2+). The interval 182–252 (SVEELMLVIK…FADSALFNLG (71 aa)) is small ATPAse domain (RuvB-S). Positions 255–329 (KSGLDKMDIK…IEHLMNYKYI (75 aa)) are head domain (RuvB-H). Residues R308 and R313 each contribute to the DNA site.

This sequence belongs to the RuvB family. Homohexamer. Forms an RuvA(8)-RuvB(12)-Holliday junction (HJ) complex. HJ DNA is sandwiched between 2 RuvA tetramers; dsDNA enters through RuvA and exits via RuvB. An RuvB hexamer assembles on each DNA strand where it exits the tetramer. Each RuvB hexamer is contacted by two RuvA subunits (via domain III) on 2 adjacent RuvB subunits; this complex drives branch migration. In the full resolvosome a probable DNA-RuvA(4)-RuvB(12)-RuvC(2) complex forms which resolves the HJ.

The protein resides in the cytoplasm. It catalyses the reaction ATP + H2O = ADP + phosphate + H(+). Functionally, the RuvA-RuvB-RuvC complex processes Holliday junction (HJ) DNA during genetic recombination and DNA repair, while the RuvA-RuvB complex plays an important role in the rescue of blocked DNA replication forks via replication fork reversal (RFR). RuvA specifically binds to HJ cruciform DNA, conferring on it an open structure. The RuvB hexamer acts as an ATP-dependent pump, pulling dsDNA into and through the RuvAB complex. RuvB forms 2 homohexamers on either side of HJ DNA bound by 1 or 2 RuvA tetramers; 4 subunits per hexamer contact DNA at a time. Coordinated motions by a converter formed by DNA-disengaged RuvB subunits stimulates ATP hydrolysis and nucleotide exchange. Immobilization of the converter enables RuvB to convert the ATP-contained energy into a lever motion, pulling 2 nucleotides of DNA out of the RuvA tetramer per ATP hydrolyzed, thus driving DNA branch migration. The RuvB motors rotate together with the DNA substrate, which together with the progressing nucleotide cycle form the mechanistic basis for DNA recombination by continuous HJ branch migration. Branch migration allows RuvC to scan DNA until it finds its consensus sequence, where it cleaves and resolves cruciform DNA. The protein is Holliday junction branch migration complex subunit RuvB of Anaplasma phagocytophilum (strain HZ).